The following is a 481-amino-acid chain: Phenylalanine--tRNA ligase alpha subunit (481 aa).

Residues Thr-322, 361–363, and Tyr-401 each bind L-phenylalanine; that span reads QLE. Residue Glu-403 participates in Mg(2+) binding. Phe-426 serves as a coordination point for L-phenylalanine.

The protein belongs to the class-II aminoacyl-tRNA synthetase family. Phe-tRNA synthetase alpha subunit type 2 subfamily. As to quaternary structure, tetramer of two alpha and two beta subunits. The cofactor is Mg(2+).

The protein localises to the cytoplasm. The catalysed reaction is tRNA(Phe) + L-phenylalanine + ATP = L-phenylalanyl-tRNA(Phe) + AMP + diphosphate + H(+). The sequence is that of Phenylalanine--tRNA ligase alpha subunit from Methanoculleus marisnigri (strain ATCC 35101 / DSM 1498 / JR1).